A 25-amino-acid chain; its full sequence is Germin-like protein (25 aa).

Belongs to the germin family. In terms of assembly, oligomer (believed to be a pentamer but probably hexamer). In terms of processing, the three different mass spectrometry results appear to arise from different glycosylation variants.

It localises to the secreted. The protein resides in the extracellular space. The protein localises to the apoplast. In terms of biological role, may play a role in plant defense. Probably has no oxalate oxidase activity even if the active site is conserved. In Citrus sinensis (Sweet orange), this protein is Germin-like protein.